A 684-amino-acid chain; its full sequence is Pre-mRNA-splicing factor CLF1 (684 aa).

14 HAT repeats span residues 43-75 (DWQRRKRTEYETVLKRNRLDLRQWMRYAQFEFD), 77-109 (KDIRRARSIYERALLVDHGFIPLWIQYIDSEIK), 111-143 (KNINHARNLLDRATNALPRVDKLWFKYLLLEES), 145-176 (GNQGIVRGIYTRWCSFEPGPDAWDSFIEFETR), 178-209 (LNFENVRNIYSKFVLVHPQIDTWLKWVRFEQT), 211-251 (GDIS…WEAS), 253-285 (GEYERSRTLYRLAVERWPISEALKEQQIQFEKK), 295-327 (IVIAKRKAEYEQYLKSDPYHYSTWWVYIDLVEE), 332-364 (QLTSAFQSFIELAKPKSLVKDSSWKRYIRICVR), 374-410 (NDLPTIRSVYQDILDIIPHKKFTFGKLWIMYAEFEIR), 412-443 (NNLLKARKILGVSLGKSPKPKVFKYYINLEIR), 445-477 (KEFDRVRKLYEKYIDFNPSSVQSWLDYAELEEN), 518-550 (AEYEKARELYEKYLILSRYDVNIWINQALFEST), and 584-622 (ENKHHTRAIFEKAISYFKEHNEDKKRQQVLQSLLEYEKV).

It belongs to the crooked-neck family. As to quaternary structure, associated with the spliceosome.

It localises to the nucleus. In terms of biological role, involved in pre-mRNA splicing and cell cycle progression. Required for the spliceosome assembly and initiation of the DNA replication. The protein is Pre-mRNA-splicing factor CLF1 (CLF1) of Kluyveromyces lactis (strain ATCC 8585 / CBS 2359 / DSM 70799 / NBRC 1267 / NRRL Y-1140 / WM37) (Yeast).